A 216-amino-acid polypeptide reads, in one-letter code: 3-isopropylmalate dehydratase small subunit (216 aa).

The protein belongs to the LeuD family. LeuD type 1 subfamily. As to quaternary structure, heterodimer of LeuC and LeuD.

It catalyses the reaction (2R,3S)-3-isopropylmalate = (2S)-2-isopropylmalate. It participates in amino-acid biosynthesis; L-leucine biosynthesis; L-leucine from 3-methyl-2-oxobutanoate: step 2/4. Its function is as follows. Catalyzes the isomerization between 2-isopropylmalate and 3-isopropylmalate, via the formation of 2-isopropylmaleate. The protein is 3-isopropylmalate dehydratase small subunit of Albidiferax ferrireducens (strain ATCC BAA-621 / DSM 15236 / T118) (Rhodoferax ferrireducens).